The primary structure comprises 521 residues: Glucose-1-phosphate adenylyltransferase large subunit 3, chloroplastic (521 aa).

Residues 1–61 (MDSCCNFSLG…RKLRPGVAYA (61 aa)) constitute a chloroplast transit peptide.

This sequence belongs to the bacterial/plant glucose-1-phosphate adenylyltransferase family. As to quaternary structure, heterotetramer. In terms of tissue distribution, probably are expressed in roots, flowers and/or seeds.

The protein localises to the plastid. It is found in the chloroplast. The enzyme catalyses alpha-D-glucose 1-phosphate + ATP + H(+) = ADP-alpha-D-glucose + diphosphate. It participates in glycan biosynthesis; starch biosynthesis. Its activity is regulated as follows. Activated by 3'phosphoglycerate, inhibited by orthophosphate. Allosteric regulation. Functionally, this protein plays a role in synthesis of starch. It catalyzes the synthesis of the activated glycosyl donor, ADP-glucose from Glc-1-P and ATP. This chain is Glucose-1-phosphate adenylyltransferase large subunit 3, chloroplastic (APL3), found in Arabidopsis thaliana (Mouse-ear cress).